The chain runs to 266 residues: Undecaprenyl-diphosphatase (266 aa).

8 consecutive transmembrane segments (helical) span residues 1-21 (MTLF…FLPI), 39-59 (QGLA…MIYF), 87-107 (WYVI…KGWI), 113-133 (TALV…YADA), 143-163 (GLTL…LIPG), 187-207 (FSFL…TLDL), 218-238 (ALLY…YLFL), and 244-264 (IGML…LWFV).

It belongs to the UppP family.

Its subcellular location is the cell inner membrane. The catalysed reaction is di-trans,octa-cis-undecaprenyl diphosphate + H2O = di-trans,octa-cis-undecaprenyl phosphate + phosphate + H(+). In terms of biological role, catalyzes the dephosphorylation of undecaprenyl diphosphate (UPP). Confers resistance to bacitracin. In Alteromonas mediterranea (strain DSM 17117 / CIP 110805 / LMG 28347 / Deep ecotype), this protein is Undecaprenyl-diphosphatase.